Consider the following 177-residue polypeptide: Protein GrpE (177 aa).

Basic and acidic residues-rich tracts occupy residues 1-19 (MAKHKHEEHPEDVEVKETV) and 29-41 (SPEKSELELANER). A disordered region spans residues 1 to 41 (MAKHKHEEHPEDVEVKETVETAEQAESASPEKSELELANER).

The protein belongs to the GrpE family. As to quaternary structure, homodimer.

It is found in the cytoplasm. In terms of biological role, participates actively in the response to hyperosmotic and heat shock by preventing the aggregation of stress-denatured proteins, in association with DnaK and GrpE. It is the nucleotide exchange factor for DnaK and may function as a thermosensor. Unfolded proteins bind initially to DnaJ; upon interaction with the DnaJ-bound protein, DnaK hydrolyzes its bound ATP, resulting in the formation of a stable complex. GrpE releases ADP from DnaK; ATP binding to DnaK triggers the release of the substrate protein, thus completing the reaction cycle. Several rounds of ATP-dependent interactions between DnaJ, DnaK and GrpE are required for fully efficient folding. The polypeptide is Protein GrpE (Streptococcus gordonii (strain Challis / ATCC 35105 / BCRC 15272 / CH1 / DL1 / V288)).